The sequence spans 325 residues: Elongation factor P--(R)-beta-lysine ligase (325 aa).

76-78 (SPE) is a binding site for substrate. Residues 100-102 (RNE) and asparagine 109 contribute to the ATP site. Position 118 (tyrosine 118) interacts with substrate. 244–245 (EL) contributes to the ATP binding site. A substrate-binding site is contributed by glutamate 251. Glycine 300 contacts ATP.

This sequence belongs to the class-II aminoacyl-tRNA synthetase family. EpmA subfamily. As to quaternary structure, homodimer.

It carries out the reaction D-beta-lysine + L-lysyl-[protein] + ATP = N(6)-((3R)-3,6-diaminohexanoyl)-L-lysyl-[protein] + AMP + diphosphate + H(+). Its function is as follows. With EpmB is involved in the beta-lysylation step of the post-translational modification of translation elongation factor P (EF-P). Catalyzes the ATP-dependent activation of (R)-beta-lysine produced by EpmB, forming a lysyl-adenylate, from which the beta-lysyl moiety is then transferred to the epsilon-amino group of a conserved specific lysine residue in EF-P. This Yersinia enterocolitica serotype O:8 / biotype 1B (strain NCTC 13174 / 8081) protein is Elongation factor P--(R)-beta-lysine ligase.